Consider the following 306-residue polypeptide: Ribonuclease Z (306 aa).

7 residues coordinate Zn(2+): His-63, His-65, Asp-67, His-68, His-141, Asp-211, and His-269. The active-site Proton acceptor is Asp-67.

The protein belongs to the RNase Z family. In terms of assembly, homodimer. Requires Zn(2+) as cofactor.

It catalyses the reaction Endonucleolytic cleavage of RNA, removing extra 3' nucleotides from tRNA precursor, generating 3' termini of tRNAs. A 3'-hydroxy group is left at the tRNA terminus and a 5'-phosphoryl group is left at the trailer molecule.. Its function is as follows. Zinc phosphodiesterase, which displays some tRNA 3'-processing endonuclease activity. Probably involved in tRNA maturation, by removing a 3'-trailer from precursor tRNA. The sequence is that of Ribonuclease Z from Staphylococcus aureus (strain bovine RF122 / ET3-1).